The sequence spans 368 residues: 4-hydroxy-3-methylbut-2-en-1-yl diphosphate synthase (flavodoxin) (368 aa).

Residues cysteine 271, cysteine 274, cysteine 306, and glutamate 313 each coordinate [4Fe-4S] cluster.

The protein belongs to the IspG family. Requires [4Fe-4S] cluster as cofactor.

The enzyme catalyses (2E)-4-hydroxy-3-methylbut-2-enyl diphosphate + oxidized [flavodoxin] + H2O + 2 H(+) = 2-C-methyl-D-erythritol 2,4-cyclic diphosphate + reduced [flavodoxin]. Its pathway is isoprenoid biosynthesis; isopentenyl diphosphate biosynthesis via DXP pathway; isopentenyl diphosphate from 1-deoxy-D-xylulose 5-phosphate: step 5/6. Its function is as follows. Converts 2C-methyl-D-erythritol 2,4-cyclodiphosphate (ME-2,4cPP) into 1-hydroxy-2-methyl-2-(E)-butenyl 4-diphosphate. This chain is 4-hydroxy-3-methylbut-2-en-1-yl diphosphate synthase (flavodoxin), found in Histophilus somni (strain 129Pt) (Haemophilus somnus).